We begin with the raw amino-acid sequence, 227 residues long: ATP-dependent dethiobiotin synthetase BioD (227 aa).

13–18 (DVGKTV) is a binding site for ATP. Residue threonine 17 coordinates Mg(2+). Lysine 38 is a catalytic residue. Residues aspartate 55, 116–119 (EGAG), 176–177 (NR), and 205–207 (PYI) contribute to the ATP site. 2 residues coordinate Mg(2+): aspartate 55 and glutamate 116.

Belongs to the dethiobiotin synthetase family. In terms of assembly, homodimer. Mg(2+) serves as cofactor.

It localises to the cytoplasm. The catalysed reaction is (7R,8S)-7,8-diammoniononanoate + CO2 + ATP = (4R,5S)-dethiobiotin + ADP + phosphate + 3 H(+). It functions in the pathway cofactor biosynthesis; biotin biosynthesis; biotin from 7,8-diaminononanoate: step 1/2. Catalyzes a mechanistically unusual reaction, the ATP-dependent insertion of CO2 between the N7 and N8 nitrogen atoms of 7,8-diaminopelargonic acid (DAPA, also called 7,8-diammoniononanoate) to form a ureido ring. This is ATP-dependent dethiobiotin synthetase BioD from Vibrio campbellii (strain ATCC BAA-1116).